The chain runs to 236 residues: Adenylate dimethylallyltransferase (236 aa).

This sequence belongs to the isopentenyl transferase family.

The enzyme catalyses dimethylallyl diphosphate + AMP = N(6)-(dimethylallyl)adenosine 5'-phosphate + diphosphate. Transfers dimethylallyl groups to AMP as part of the biosynthesis of cytokinin phytohormones. The polypeptide is Adenylate dimethylallyltransferase (ipt) (Pantoea agglomerans pv. gypsophilae (Erwinia herbicola)).